Here is a 423-residue protein sequence, read N- to C-terminus: Cyclin-dependent kinase 14 (423 aa).

Residues serine 32, serine 49, and serine 88 each carry the phosphoserine modification. Polar residues predominate over residues 49–64; sequence SENNACINFKTSSTGK. The segment at 49–87 is disordered; that stretch reads SENNACINFKTSSTGKESPKVRRHSSPSSPTSPKFGKAD. Residues 89-373 form the Protein kinase domain; that stretch reads YEKLEKLGEG…AQAALSHEYF (285 aa). ATP-binding positions include 95 to 103 and lysine 118; that span reads LGEGSYATV. Aspartate 210 serves as the catalytic Proton acceptor. The interval 403-423 is disordered; the sequence is ESMRAFGKNNSYGKSLSNSKH. Residues 410–423 show a composition bias toward polar residues; sequence KNNSYGKSLSNSKH.

This sequence belongs to the protein kinase superfamily. CMGC Ser/Thr protein kinase family. CDC2/CDKX subfamily. In terms of assembly, found in a complex with LRP6, CCNY and CAPRIN2 during G2/M stage; CAPRIN2 functions as a scaffold for the complex by binding to CCNY via its N terminus and to CDK14 via its C terminus. Interacts with CCNY; CCNY mediates its recruitment to the plasma membrane and promotes phosphorylation of LRP6. Interacts with CCDN3 and CDKN1A. Interacts with SEPT8. Interacts with 14-3-3 proteina YWHAB, YWHAE, YWHAH and YWHAQ.

Its subcellular location is the cell membrane. It localises to the cytoplasm. It is found in the nucleus. The catalysed reaction is L-seryl-[protein] + ATP = O-phospho-L-seryl-[protein] + ADP + H(+). It carries out the reaction L-threonyl-[protein] + ATP = O-phospho-L-threonyl-[protein] + ADP + H(+). Its activity is regulated as follows. Serine/threonine-protein kinase activity is promoted by associated cyclins CCDN3 and CCNY and repressed by CDKN1A. Serine/threonine-protein kinase involved in the control of the eukaryotic cell cycle, whose activity is controlled by an associated cyclin. Acts as a cell-cycle regulator of Wnt signaling pathway during G2/M phase by mediating the phosphorylation of LRP6 at 'Ser-1490', leading to the activation of the Wnt signaling pathway. Acts as a regulator of cell cycle progression and cell proliferation via its interaction with CCDN3. Phosphorylates RB1 in vitro, however the relevance of such result remains to be confirmed in vivo. May also play a role in meiosis, neuron differentiation and may indirectly act as a negative regulator of insulin-responsive glucose transport. This chain is Cyclin-dependent kinase 14 (CDK14), found in Callithrix jacchus (White-tufted-ear marmoset).